Here is a 120-residue protein sequence, read N- to C-terminus: Glycine cleavage system H protein (120 aa).

Residues Asp-20–Asp-102 form the Lipoyl-binding domain. Lys-61 carries the N6-lipoyllysine modification.

Belongs to the GcvH family. As to quaternary structure, the glycine cleavage system is composed of four proteins: P, T, L and H. (R)-lipoate is required as a cofactor.

Functionally, the glycine cleavage system catalyzes the degradation of glycine. The H protein shuttles the methylamine group of glycine from the P protein to the T protein. In Deinococcus radiodurans (strain ATCC 13939 / DSM 20539 / JCM 16871 / CCUG 27074 / LMG 4051 / NBRC 15346 / NCIMB 9279 / VKM B-1422 / R1), this protein is Glycine cleavage system H protein.